Reading from the N-terminus, the 111-residue chain is Cytochrome c (111 aa).

At alanine 1 the chain carries N-acetylalanine. 3 residues coordinate heme c: cysteine 22, cysteine 25, and histidine 26. The residue at position 80 (lysine 80) is an N6,N6,N6-trimethyllysine. Methionine 88 serves as a coordination point for heme c. Lysine 94 is modified (N6,N6,N6-trimethyllysine).

This sequence belongs to the cytochrome c family. In terms of processing, binds 1 heme c group covalently per subunit.

It is found in the mitochondrion intermembrane space. Electron carrier protein. The oxidized form of the cytochrome c heme group can accept an electron from the heme group of the cytochrome c1 subunit of cytochrome reductase. Cytochrome c then transfers this electron to the cytochrome oxidase complex, the final protein carrier in the mitochondrial electron-transport chain. This chain is Cytochrome c, found in Cannabis sativa (Hemp).